The sequence spans 1834 residues: Non-reducing polyketide synthase spyA (1834 aa).

The region spanning 91–255 is the Starter acyltransferase (SAT) domain; sequence LAPLTVIIHL…TRIPIYGRYH (165 aa). The 417-residue stretch at 385 to 801 folds into the Ketosynthase family 3 (KS3) domain; sequence EHSIAVIGAA…GNNTAVIVCE (417 aa). Active-site for beta-ketoacyl synthase activity residues include Cys551, His687, and His724. Residues 919–1164 enclose the Malonyl-CoA:ACP transacylase (MAT) domain; the sequence is YEGSSLLRSH…KELGPCTWVE (246 aa). The interval 1269–1398 is N-terminal hotdog fold; the sequence is PLVYLLRDEG…GVISLRQERH (130 aa). Residues 1269–1577 enclose the PKS/mFAS DH domain; sequence PLVYLLRDEG…FVRITASSLN (309 aa). Residues 1269-1577 form a product template (PT) domain region; the sequence is PLVYLLRDEG…FVRITASSLN (309 aa). The segment at 1428–1577 is C-terminal hotdog fold; that stretch reads AISLKEGIIY…FVRITASSLN (150 aa). A Carrier 1 domain is found at 1616-1690; that stretch reads SDILSILSHL…TLCQEIQTQR (75 aa). An O-(pantetheine 4'-phosphoryl)serine modification is found at Ser1650. Residues 1693–1720 form a disordered region; it reads RLARASRTTTATRNTSFSLGRRTSSTES. Over residues 1697–1710 the composition is skewed to low complexity; that stretch reads ASRTTTATRNTSFS. The region spanning 1731–1807 is the Carrier 2 domain; sequence SKSAAVLAQL…GLARLILASE (77 aa). An O-(pantetheine 4'-phosphoryl)serine modification is found at Ser1767.

Requires pantetheine 4'-phosphate as cofactor.

The catalysed reaction is 2 malonyl-CoA + acetyl-CoA + 2 H(+) = triacetate lactone + 2 CO2 + 3 CoA. Its pathway is secondary metabolite biosynthesis; terpenoid biosynthesis. Non-reducing polyketide synthase; part of the gene cluster that mediates the biosynthesis of meroterpenoids called sartorypyrones. The biosynthesis of sartorypyrones begins with the production of triacetic acid lactone (TAL) by the NR-PKS spyA using one molecule of acetyl-CoA and two molecules of malonyl-CoA. As spyA lacks a thioesterase (TE) domain, TAL is likely generated through self-release from spyA by spontaneous lactonization. After production of TAL, the prenyltransferase spyF then conjugates geranylgeranyl pyrophosphate (GGPP) to TAL to form geranylgeranyl-triacetate lactone, for which the pathway-specific geranylgeranyl pyrophosphate synthase (GGPS) spyE is required to provide GGPP. Subsequently, geranylgeranyl-triacetate lactone is epoxidized at the terminal olein by the FAD-dependent monooxygenase spyC, followed by cyclization of the terpenoid component catalyzed by the terpene cyclase spyD to produce both the bicyclic sartorypyrone F and the monocyclic sartorypyrone D. Finally, the last step of the biosynthesis involves the acetylation of the meroterpenoids sartorypyrones D and F by the acetyltransferase SpyB to produce sartorypyrones A and G, respectively. This is Non-reducing polyketide synthase spyA from Aspergillus fumigatus (strain ATCC MYA-4609 / CBS 101355 / FGSC A1100 / Af293) (Neosartorya fumigata).